The sequence spans 289 residues: O-methyltransferase asqN (289 aa).

Residue Asp-155 participates in S-adenosyl-L-methionine binding. His-195 functions as the Proton acceptor in the catalytic mechanism.

The protein belongs to the class I-like SAM-binding methyltransferase superfamily. Cation-independent O-methyltransferase family.

It functions in the pathway secondary metabolite biosynthesis. The protein operates within alkaloid biosynthesis. It participates in mycotoxin biosynthesis. Functionally, O-methyltransferase; part of the gene cluster that mediates the biosynthesis of the aspoquinolone mycotoxins. The role of asqN within the aspoquinolone pathway has still to be determined. The first step of the pathway is catalyzed by the nonribosomal peptide synthetase asqK that condenses anthranilic acid and O-methyl-L-tyrosine to produce 4'-methoxycyclopeptin. 4'-methoxycyclopeptin is then converted to 4'-methoxydehydrocyclopeptin by the ketoglutarate-dependent dioxygenase asqJ. AsqJ also converts its first product 4'-methoxydehydrocyclopeptin to 4'-methoxycyclopenin. The following conversion of 4'-methoxycyclopenin into 4'-methoxyviridicatin is catalyzed by the cyclopenase asqI. 4'-methoxyviridicatin is the precursor of quinolone natural products, and is further converted to quinolinone B. The prenyltransferase asqH1 then catalyzes the canonical Friedel-Crafts alkylation of quinolinone B with dimethylallyl cation to yield dimethylallyl quinolone, which is subjected to FAD-dependent dehydrogenation by the FAD-linked oxidoreductase asqF to yield conjugated aryl diene. The delta(3') double bond then serves as the site of the second alkylation with DMAPP catalyzed by the prenyltransferase asqH2 to yield a carbenium ion intermediate, which can be attacked by H(2)O to yield a styrenyl quinolone containing a C3'-hydroxyprenyl chain. The FAD-dependent monooxygenase asqG performs epoxidation of the terminal C7'-C8' olefin. Finally, after dehydratation of the epoxide at C3 by asqC, the quinolone epoxide rearrangement protein asqO catalyzes an enzymatic 3-exo-tet cyclization to yield the cyclopropyl-THF ring system in aspoquinolone. The sequence is that of O-methyltransferase asqN from Emericella nidulans (strain FGSC A4 / ATCC 38163 / CBS 112.46 / NRRL 194 / M139) (Aspergillus nidulans).